The sequence spans 301 residues: MDFAQVKDYLVNLQNNIVAGLEQADGGSFRRDSWDRPEGGGGTSCVIEEGNVLERGGVNFSHVHGKGLPASATAARPELAGRAFEAAGVSLVLHPRNPYAPTVHMNVRFFAAIKEGAEPVWWFGGGMDLTPYYGFEEDAIHFHQICKHALQPSGSEYYPRFKKWCDEYFYLKHRKEPRGIGGVFFDDLNQPDFVTCFNLTKSVGDQFLAAYVPILQKRCNLPYGERERDFQAYRRGRYVEFNLVWDRGTLFGLQSGGRTESILMSLPPIVKWRYDWSPAAGSPEAKLYTDFLIGKDWLPLD.

Ser-90 is a substrate binding site. 2 residues coordinate a divalent metal cation: His-94 and His-104. His-104 acts as the Proton donor in catalysis. Substrate is bound at residue 106 to 108 (NVR). 2 residues coordinate a divalent metal cation: His-143 and His-173. Residues 238 to 273 (YVEFNLVWDRGTLFGLQSGGRTESILMSLPPIVKWR) are important for dimerization. Residue 256 to 258 (GGR) participates in substrate binding.

This sequence belongs to the aerobic coproporphyrinogen-III oxidase family. Homodimer. The cofactor is a divalent metal cation.

The protein localises to the cytoplasm. It catalyses the reaction coproporphyrinogen III + O2 + 2 H(+) = protoporphyrinogen IX + 2 CO2 + 2 H2O. Its pathway is porphyrin-containing compound metabolism; protoporphyrin-IX biosynthesis; protoporphyrinogen-IX from coproporphyrinogen-III (O2 route): step 1/1. In terms of biological role, involved in the heme biosynthesis. Catalyzes the aerobic oxidative decarboxylation of propionate groups of rings A and B of coproporphyrinogen-III to yield the vinyl groups in protoporphyrinogen-IX. This chain is Oxygen-dependent coproporphyrinogen-III oxidase, found in Nitrosomonas eutropha (strain DSM 101675 / C91 / Nm57).